The sequence spans 436 residues: 3-ketoacyl-CoA thiolase (436 aa).

Cysteine 99 (acyl-thioester intermediate) is an active-site residue. Residues histidine 392 and cysteine 422 each act as proton acceptor in the active site.

This sequence belongs to the thiolase-like superfamily. Thiolase family. In terms of assembly, heterotetramer of two alpha chains (FadJ) and two beta chains (FadI).

The protein resides in the cytoplasm. The catalysed reaction is an acyl-CoA + acetyl-CoA = a 3-oxoacyl-CoA + CoA. It participates in lipid metabolism; fatty acid beta-oxidation. Its function is as follows. Catalyzes the final step of fatty acid oxidation in which acetyl-CoA is released and the CoA ester of a fatty acid two carbons shorter is formed. This is 3-ketoacyl-CoA thiolase from Citrobacter koseri (strain ATCC BAA-895 / CDC 4225-83 / SGSC4696).